Reading from the N-terminus, the 567-residue chain is MPASDRTSETGDVEKVTAAETPKEVPASNAAESTALTGLPLYTVLVGLGLALFLGAMDMAMLGTAVPSITSTFHTTADIGWYGAAYPLTMSSIQLLAGKIYAQFPQKLVFLVFFGLFMLGSLLCGVAVNSPMFIVGRATAGAGAAGVLSGTLAIVSAVVPLDKQSLILGLMMSLVGTAVVLGPVISGLLTDHSTWRWCFYLNLPCGGVTLLALILFFRPPKRPTRTTPLSIPELIKKLDLAGCLGFIPAVVMLLLALQWGGDGSKEHAWNSATIIGLFCGAGVSLILFLIWEHYQGDDAMLPLKFFRDLTIIASCLYGFALLGGYVVVGYFLPEWFQIIKGANPQSSAVMLLPNVITNFISKAVIGVIVNKTGYFNPWLFFGAAVLAIGSGLETNFHPSTPRPNWIGYQILQGAALGIIQAPTLGVQVALAKQKHLIPVALSLVIFFQYFGSSIMLSISLTIFQNLLRPGLVSKAGMTEAQVQQYVAAGNSEVRELTAQIDPSRLGVVLEVYNDAIAGVMWLSTAAALFGFLVSFGFPWKSLKAQTEENKKEAAEEEEEVKVAAVEA.

Basic and acidic residues predominate over residues Met-1–Lys-23. Positions Met-1 to Glu-24 are disordered. The next 10 membrane-spanning stretches (helical) occupy residues Ala-35–Gly-55, Ala-77–Ala-97, Leu-108–Val-128, Gly-141–Leu-161, Ser-165–Ile-185, Trp-197–Phe-217, Leu-240–Gly-260, Ser-271–Trp-291, Ile-311–Phe-331, and Val-349–Val-369. Asn-370 is a glycosylation site (N-linked (GlcNAc...) asparagine). 4 consecutive transmembrane segments (helical) span residues Thr-372–Leu-392, Ile-410–Leu-430, Leu-436–Leu-456, and Ala-515–Phe-535. Positions Glu-547–Ala-567 are disordered.

Belongs to the major facilitator superfamily. TCR/Tet family.

It localises to the cell membrane. In terms of biological role, MFS-type transporter; part of the gene cluster that mediates the biosynthesis of oxaleimides, cytotoxic compounds containing an unusual disubstituted succinimide moiety. The chain is MFS-type transporter poxA from Penicillium oxalicum (strain 114-2 / CGMCC 5302) (Penicillium decumbens).